A 206-amino-acid polypeptide reads, in one-letter code: Ribosomal RNA large subunit methyltransferase E (206 aa).

Positions 61, 63, 81, 97, and 122 each coordinate S-adenosyl-L-methionine. Lys-162 serves as the catalytic Proton acceptor.

It belongs to the class I-like SAM-binding methyltransferase superfamily. RNA methyltransferase RlmE family.

Its subcellular location is the cytoplasm. It carries out the reaction uridine(2552) in 23S rRNA + S-adenosyl-L-methionine = 2'-O-methyluridine(2552) in 23S rRNA + S-adenosyl-L-homocysteine + H(+). Specifically methylates the uridine in position 2552 of 23S rRNA at the 2'-O position of the ribose in the fully assembled 50S ribosomal subunit. This is Ribosomal RNA large subunit methyltransferase E from Neisseria gonorrhoeae (strain NCCP11945).